The primary structure comprises 979 residues: Zinc finger BED domain-containing protein 6 (979 aa).

Residues 1–89 are required for nucleolar localization; that stretch reads MSVCTLSVPV…ILAKKFSKDL (89 aa). The segment at 130-187 adopts a BED-type 1 zinc-finger fold; it reads AKTSIVWHFFHVDPQYTWRAICNLCEKSVSRGKPGSHLGTSTLQRHLQARHSPHWTRA. 4 residues coordinate Zn(2+): Cys151, Cys154, His175, and His180. Residues 207 to 232 form a disordered region; it reads PSSGSNGSFEYIPTDPLDDNRMGKKH. The BED-type 2 zinc finger occupies 264–321; that stretch reads AKTSAVWNFFYTDPQHISRAVCNICKRSVSRGRPGSHLGTSTLQRHLQATHPIHWAVA. 4 residues coordinate Zn(2+): Cys285, Cys288, His309, and His314. The segment at 333–383 is disordered; the sequence is DEAETERSDLLSDTLHGEKSTGSQDLTAEDLSDSDSDEPMLEVENRSESPI. Residues 337 to 351 are compositionally biased toward basic and acidic residues; the sequence is TERSDLLSDTLHGEK. Residues 359 to 373 are compositionally biased toward acidic residues; sequence TAEDLSDSDSDEPML. Position 381 is a phosphoserine (Ser381). The segment at 866–948 is HATC (Hobo-Ac-Tam3) domain; that stretch reads VVDEYFKEKY…EQLMFLKMNL (83 aa).

As to expression, expressed in pancreatic islet cells (at protein level).

It localises to the nucleus. It is found in the nucleolus. The protein localises to the cytoplasm. In terms of biological role, transcriptional repressor which binds to the consensus sequence 5'-GCTCGC-3', transcription regulation may be tissue-specific. Regulates the expression of target genes such as: IGF2, PGAP6/TMEM8, ENHO, and PIANP. Acts as a transcriptional repressor of growth factor IGF2, thereby negatively regulating postnatal growth of muscles and internal organs, especially in females. Negatively regulates myoblast differentiation and myoblast mitochondrial activity via its regulation of IGF2 transcription. Negatively regulates the cell cycle of myoblasts, potentially via transcriptional regulation of the E2F family of transcription factors such as: E2F1 and E2F2. Positively regulates the cell cycle and survival of pancreatic beta cells. Binds to the CDH2 gene and may directly repress CDH2 transcription. Probably by controlling CDH2 expression, regulates pancreatic beta cell adhesion, and formation of cell-to-cell junctions between pancreatic beta cells and neural crest stem cells. May also play a role in embryonic beta cell differentiation. May play a role in insulin sensitivity and glucose clearance. This is Zinc finger BED domain-containing protein 6 from Homo sapiens (Human).